Here is a 531-residue protein sequence, read N- to C-terminus: Acid-sensing ion channel 3 (531 aa).

Over 1-43 (MKPTSGPEEARRPASDIRVFASNCSMHGLGHVFGPGSLSLRRG) the chain is Cytoplasmic. The chain crosses the membrane as a helical span at residues 44-61 (MWAAAVVLSVATFLYQVA). The Extracellular segment spans residues 62–441 (ERVRYYREFH…SELLGDIGGQ (380 aa)). Disulfide bonds link Cys-92-Cys-186, Cys-164-Cys-171, Cys-282-Cys-370, Cys-315-Cys-366, Cys-319-Cys-364, Cys-328-Cys-350, and Cys-330-Cys-342. N-linked (GlcNAc...) asparagine glycosylation occurs at Asn-175. Residues 285-307 (ASLNPNYEPEPSDPLGSPSPSPS) are disordered. The N-linked (GlcNAc...) asparagine glycan is linked to Asn-398. The chain crosses the membrane as a helical span at residues 442 to 460 (MGLFIGASLLTILEILDYL). Positions 447 to 449 (GAS) match the GAS motif; ion selectivity filter motif. Over 461-531 (CEVFRDKVLG…HRTCYLVTQL (71 aa)) the chain is Cytoplasmic. Residues 528-531 (VTQL) carry the PDZ-binding motif.

It belongs to the amiloride-sensitive sodium channel (TC 1.A.6) family. ASIC3 subfamily. In terms of assembly, can form homotrimeric channels. Heterotrimer; forms functional heterotrimers producing channel with different properties. Forms heterotrimers with ASIC2; gives rise to a biphasic current with a sustained current which discriminates poorly between Na(+) and K(+). Interacts with STOM; inhibits ASIC3 acid-evoked current. Interacts with LIN7B (via PDZ domain); increases ASIC3 expression at the plasma membrane. Interacts with MAGI1 (via PDZ domain); probably regulates ASIC3. Interacts with GOPC (via PDZ domain); probably regulates ASIC3. Interacts with DLG4 (via PDZ domain); reduces ASIC3 expression at the plasma membrane. As to expression, expressed by sensory neurons. Strongly expressed in brain, spinal cord, lung, lymph nodes, kidney, pituitary, heart and testis.

It localises to the cell membrane. Its subcellular location is the cytoplasm. The enzyme catalyses Na(+)(in) = Na(+)(out). It catalyses the reaction K(+)(in) = K(+)(out). It carries out the reaction Ca(2+)(in) = Ca(2+)(out). With respect to regulation, inhibited by the diuretic drug amiloride. Inhibited by the diuretic drug triamterene. Potentiated by the vertebrate neuropeptide FF (NPFF) and the related FMRFamide. Specifically and reversibly inhibited by the a sea anemone toxin APETx2. Forms pH-gated heterotrimeric sodium channels that act as postsynaptic excitatory receptors in the nervous system. Upon extracellular acidification, these channels generate a biphasic current with a fast inactivating and a slow sustained phase. ASIC3 is more sensitive to protons and gates between closed, open, and desensitized states faster than other ASICs. Displays high selectivity for sodium ions but can also permit the permeation of other cations. As a neuronal acid sensor, probably contributes to mechanoreception, acid nociception, and heat nociception. By forming heterotrimeric channels with ASIC2, generates a biphasic current with a fast inactivating and a slow sustained phase, which in sensory neurons is proposed to mediate the pain induced by acidosis that occurs in ischemic, damaged or inflamed tissues. This chain is Acid-sensing ion channel 3, found in Homo sapiens (Human).